We begin with the raw amino-acid sequence, 268 residues long: LOB domain-containing protein 22 (268 aa).

The interval 1–31 is disordered; that stretch reads MPSGKPSSVFPLHPKPTPLKPSSSTSSSNNN. Low complexity predominate over residues 22-31; that stretch reads SSSTSSSNNN. The LOB domain maps to 35–136; the sequence is QACAACKYQR…NELEIVLQQL (102 aa).

This sequence belongs to the LOB domain-containing protein family.

The protein is LOB domain-containing protein 22 (LBD22) of Arabidopsis thaliana (Mouse-ear cress).